The chain runs to 431 residues: Peptidase B (431 aa).

Lys196 and Asp201 together coordinate Mn(2+). Residue Lys208 is part of the active site. 3 residues coordinate Mn(2+): Asp219, Asp278, and Glu280. The active site involves Arg282.

This sequence belongs to the peptidase M17 family. Homohexamer. Requires Mn(2+) as cofactor.

Its subcellular location is the cytoplasm. The catalysed reaction is Release of an N-terminal amino acid, Xaa, from a peptide or arylamide. Xaa is preferably Glu or Asp but may be other amino acids, including Leu, Met, His, Cys and Gln.. Probably plays an important role in intracellular peptide degradation. In Photorhabdus laumondii subsp. laumondii (strain DSM 15139 / CIP 105565 / TT01) (Photorhabdus luminescens subsp. laumondii), this protein is Peptidase B.